The primary structure comprises 130 residues: Capsid protein (130 aa).

The segment at 31–104 is viral RNA-binding; it reads EWLSNNSRSQ…FAATDDVTVI (74 aa).

Belongs to the Leviviricetes capsid protein family. Homodimer. The capsid proteins form dimers that assemble by group of 5. Twelve such pentamers are linked together with free dimers. The homodimers binds to the viral RNA via an operator hairpin, but also to many other RNA sequences in the viral genome; this interaction probably shifts the virus from the replicative to the assembly phase and ensures specific encapsidation of the viral genome.

The protein resides in the virion. Its function is as follows. Capsid protein self-assembles to form an icosahedral capsid with a T=3 symmetry, about 26 nm in diameter, and consisting of 89 capsid proteins dimers (178 capsid proteins). Involved in viral genome encapsidation through the interaction between a capsid protein dimer and the multiple packaging signals present in the RNA genome. The capsid also contains 1 copy of the A2 maturation protein. Functionally, acts as a translational repressor of viral replicase synthesis late in infection. This latter function is the result of capsid protein interaction with an RNA hairpin which contains the replicase ribosome-binding site. The sequence is that of Capsid protein from Escherichia coli (Bacteriophage JP34).